The chain runs to 258 residues: UPF0246 protein YaaA (258 aa).

It belongs to the UPF0246 family.

In Shigella flexneri serotype 5b (strain 8401), this protein is UPF0246 protein YaaA.